The primary structure comprises 264 residues: Thymidylate synthase (264 aa).

DUMP is bound at residue Arg-21. His-51 is a binding site for (6R)-5,10-methylene-5,6,7,8-tetrahydrofolate. 126-127 provides a ligand contact to dUMP; it reads RR. Residue Cys-146 is the Nucleophile of the active site. DUMP-binding positions include 166-169, Asn-177, and 207-209; these read RSCD and HLY. Asp-169 serves as a coordination point for (6R)-5,10-methylene-5,6,7,8-tetrahydrofolate. Ala-263 serves as a coordination point for (6R)-5,10-methylene-5,6,7,8-tetrahydrofolate.

Belongs to the thymidylate synthase family. Bacterial-type ThyA subfamily. As to quaternary structure, homodimer.

The protein localises to the cytoplasm. It carries out the reaction dUMP + (6R)-5,10-methylene-5,6,7,8-tetrahydrofolate = 7,8-dihydrofolate + dTMP. It participates in pyrimidine metabolism; dTTP biosynthesis. Catalyzes the reductive methylation of 2'-deoxyuridine-5'-monophosphate (dUMP) to 2'-deoxythymidine-5'-monophosphate (dTMP) while utilizing 5,10-methylenetetrahydrofolate (mTHF) as the methyl donor and reductant in the reaction, yielding dihydrofolate (DHF) as a by-product. This enzymatic reaction provides an intracellular de novo source of dTMP, an essential precursor for DNA biosynthesis. The protein is Thymidylate synthase of Cronobacter sakazakii (strain ATCC BAA-894) (Enterobacter sakazakii).